The primary structure comprises 284 residues: 4-hydroxy-3-methylbut-2-enyl diphosphate reductase (284 aa).

Cysteine 12 lines the [4Fe-4S] cluster pocket. (2E)-4-hydroxy-3-methylbut-2-enyl diphosphate contacts are provided by histidine 40 and histidine 72. Dimethylallyl diphosphate-binding residues include histidine 40 and histidine 72. Isopentenyl diphosphate is bound by residues histidine 40 and histidine 72. Cysteine 94 is a binding site for [4Fe-4S] cluster. Position 122 (histidine 122) interacts with (2E)-4-hydroxy-3-methylbut-2-enyl diphosphate. Histidine 122 contacts dimethylallyl diphosphate. Histidine 122 is a binding site for isopentenyl diphosphate. The active-site Proton donor is the glutamate 124. (2E)-4-hydroxy-3-methylbut-2-enyl diphosphate is bound at residue threonine 161. Cysteine 193 serves as a coordination point for [4Fe-4S] cluster. Serine 221, asparagine 223, and serine 264 together coordinate (2E)-4-hydroxy-3-methylbut-2-enyl diphosphate. Dimethylallyl diphosphate contacts are provided by serine 221, asparagine 223, and serine 264. 3 residues coordinate isopentenyl diphosphate: serine 221, asparagine 223, and serine 264.

It belongs to the IspH family. [4Fe-4S] cluster is required as a cofactor.

The enzyme catalyses isopentenyl diphosphate + 2 oxidized [2Fe-2S]-[ferredoxin] + H2O = (2E)-4-hydroxy-3-methylbut-2-enyl diphosphate + 2 reduced [2Fe-2S]-[ferredoxin] + 2 H(+). The catalysed reaction is dimethylallyl diphosphate + 2 oxidized [2Fe-2S]-[ferredoxin] + H2O = (2E)-4-hydroxy-3-methylbut-2-enyl diphosphate + 2 reduced [2Fe-2S]-[ferredoxin] + 2 H(+). It participates in isoprenoid biosynthesis; dimethylallyl diphosphate biosynthesis; dimethylallyl diphosphate from (2E)-4-hydroxy-3-methylbutenyl diphosphate: step 1/1. Its pathway is isoprenoid biosynthesis; isopentenyl diphosphate biosynthesis via DXP pathway; isopentenyl diphosphate from 1-deoxy-D-xylulose 5-phosphate: step 6/6. Its function is as follows. Catalyzes the conversion of 1-hydroxy-2-methyl-2-(E)-butenyl 4-diphosphate (HMBPP) into a mixture of isopentenyl diphosphate (IPP) and dimethylallyl diphosphate (DMAPP). Acts in the terminal step of the DOXP/MEP pathway for isoprenoid precursor biosynthesis. In Dehalococcoides mccartyi (strain ATCC BAA-2100 / JCM 16839 / KCTC 5957 / BAV1), this protein is 4-hydroxy-3-methylbut-2-enyl diphosphate reductase.